The sequence spans 461 residues: NADH-ubiquinone oxidoreductase chain 4 (461 aa).

Transmembrane regions (helical) follow at residues 20–42 (PAWL…LTWL), 61–81 (PLST…ILAS), 93–113 (QRSF…AFGA), 114–134 (TEII…LIII), 147–167 (GTYF…ALLM), 197–217 (WTAC…HLWL), 225–245 (PIAG…YGMM), 258–278 (LAYP…SICL), 285–304 (SLIA…GILT), 309–331 (GFTG…FCLA), 351–371 (VILP…LALP), 393–413 (TLTM…HMFL), and 436–456 (LLMT…ELIW).

Belongs to the complex I subunit 4 family.

The protein resides in the mitochondrion membrane. It catalyses the reaction a ubiquinone + NADH + 5 H(+)(in) = a ubiquinol + NAD(+) + 4 H(+)(out). In terms of biological role, core subunit of the mitochondrial membrane respiratory chain NADH dehydrogenase (Complex I) that is believed to belong to the minimal assembly required for catalysis. Complex I functions in the transfer of electrons from NADH to the respiratory chain. The immediate electron acceptor for the enzyme is believed to be ubiquinone. In Latimeria chalumnae (Coelacanth), this protein is NADH-ubiquinone oxidoreductase chain 4 (MT-ND4).